Consider the following 167-residue polypeptide: 2-C-methyl-D-erythritol 2,4-cyclodiphosphate synthase (167 aa).

Positions 10 and 12 each coordinate a divalent metal cation. Residues 10–12 (DVH) and 36–37 (HS) each bind 4-CDP-2-C-methyl-D-erythritol 2-phosphate. His-44 is a binding site for a divalent metal cation. 4-CDP-2-C-methyl-D-erythritol 2-phosphate contacts are provided by residues 58–60 (NIG), 63–67 (FPNTN), 134–137 (TTSE), Phe-141, and Arg-144.

The protein belongs to the IspF family. As to quaternary structure, homotrimer. The cofactor is a divalent metal cation.

It catalyses the reaction 4-CDP-2-C-methyl-D-erythritol 2-phosphate = 2-C-methyl-D-erythritol 2,4-cyclic diphosphate + CMP. It functions in the pathway isoprenoid biosynthesis; isopentenyl diphosphate biosynthesis via DXP pathway; isopentenyl diphosphate from 1-deoxy-D-xylulose 5-phosphate: step 4/6. Involved in the biosynthesis of isopentenyl diphosphate (IPP) and dimethylallyl diphosphate (DMAPP), two major building blocks of isoprenoid compounds. Catalyzes the conversion of 4-diphosphocytidyl-2-C-methyl-D-erythritol 2-phosphate (CDP-ME2P) to 2-C-methyl-D-erythritol 2,4-cyclodiphosphate (ME-CPP) with a corresponding release of cytidine 5-monophosphate (CMP). In Azobacteroides pseudotrichonymphae genomovar. CFP2, this protein is 2-C-methyl-D-erythritol 2,4-cyclodiphosphate synthase.